A 1019-amino-acid chain; its full sequence is Macrophage colony-stimulating factor 1 receptor 2 (1019 aa).

The first 18 residues, 1–18 (MKSYCLLLSITLSCCCSA), serve as a signal peptide directing secretion. At 19-576 (EDLPDPPSIH…LREHNSAFMS (558 aa)) the chain is on the extracellular side. Ig-like C2-type domains are found at residues 37 to 109 (QAEA…IHLY), 106 to 212 (IHLY…LLVA), and 224 to 312 (QNKA…LIVL). An intrachain disulfide couples Cys-52 to Cys-92. Asn-96, Asn-148, Asn-169, Asn-249, Asn-342, Asn-346, Asn-355, Asn-369, Asn-379, Asn-408, Asn-422, Asn-429, Asn-433, and Asn-514 each carry an N-linked (GlcNAc...) asparagine glycan. 2 cysteine pairs are disulfide-bonded: Cys-139/Cys-193 and Cys-239/Cys-294. Ig-like C2-type domains follow at residues 383–474 (STTV…LRIY) and 487–567 (TLTC…VFHL). Cys-490 and Cys-552 are joined by a disulfide. Residues 577-597 (ALIGAGSTAAILFLLLLVVFY) traverse the membrane as a helical segment. At 598 to 1019 (KWRQKPKYEI…LSVTNIYQLS (422 aa)) the chain is on the cytoplasmic side. The tract at residues 601 to 633 (QKPKYEIRWKIIESTEGNHYTFVDPTLLPYNYK) is regulatory juxtamembrane domain. Tyr-620 is modified (phosphotyrosine; by autocatalysis). A Protein kinase domain is found at 641–963 (LRLGAVLGSG…MICQLIDRLL (323 aa)). Residues 647-655 (LGSGAFGKV) and Lys-674 each bind ATP. A phosphotyrosine; by autocatalysis mark is found at Tyr-756 and Tyr-778. Asp-827 serves as the catalytic Proton acceptor. The activation loop stretch occupies residues 845–867 (DFGLARDIQNDDSYIVQGNARLP). Residues Tyr-858 and Tyr-974 each carry the phosphotyrosine; by autocatalysis modification. The interval 970–1001 (NHQSYSNINETKKDDFKGGKSQRRGEEEEQRR) is disordered. Basic and acidic residues predominate over residues 979 to 1001 (ETKKDDFKGGKSQRRGEEEEQRR). Phosphotyrosine; by autocatalysis is present on Tyr-1016.

It belongs to the protein kinase superfamily. Tyr protein kinase family. CSF-1/PDGF receptor subfamily. Monomer. Homodimer. Interacts with CSF1. Autophosphorylated in response to CSF1 binding. autophosphorylation, leading to its degradation. Post-translationally, ubiquitinated. Becomes rapidly polyubiquitinated after autophosphorylation, leading to its degradation.

The protein resides in the cell membrane. The enzyme catalyses L-tyrosyl-[protein] + ATP = O-phospho-L-tyrosyl-[protein] + ADP + H(+). Its activity is regulated as follows. Present in an inactive conformation in the absence of bound ligand. CSF1 binding leads to dimerization and activation by autophosphorylation on tyrosine residues. Functionally, tyrosine-protein kinase that acts as a cell-surface receptor for CSF1 and plays an essential role in the regulation of survival, proliferation and differentiation of hematopoietic precursor cells, especially mononuclear phagocytes, such as macrophages and monocytes. Plays an important role in innate immunity and in inflammatory processes. Plays an important role in the regulation of osteoclast proliferation and differentiation, the regulation of bone resorption, and is required for normal bone development. Promotes reorganization of the actin cytoskeleton, regulates formation of membrane ruffles, cell adhesion and cell migration. Activates several signaling pathways in response to ligand binding. This chain is Macrophage colony-stimulating factor 1 receptor 2 (csf1r2), found in Takifugu rubripes (Japanese pufferfish).